Here is a 21-residue protein sequence, read N- to C-terminus: Phospholipase A2 crotoxin basic chain (21 aa).

It belongs to the phospholipase A2 family. Group II subfamily. It depends on Ca(2+) as a cofactor. As to expression, expressed by the venom gland.

It is found in the secreted. The catalysed reaction is a 1,2-diacyl-sn-glycero-3-phosphocholine + H2O = a 1-acyl-sn-glycero-3-phosphocholine + a fatty acid + H(+). Snake venom phospholipase A2 (PLA2) that induces a conspicuous local myotoxic effect and moderate footpad edema. In vitro, it shows anticoagulant effects and is not cytotoxic on myoblast but is able to lyse myotubes. PLA2 catalyzes the calcium-dependent hydrolysis of the 2-acyl groups in 3-sn-phosphoglycerides. This is Phospholipase A2 crotoxin basic chain from Crotalus durissus cumanensis (South American rattlesnake).